Here is an 85-residue protein sequence, read N- to C-terminus: Sec-independent protein translocase protein TatA (85 aa).

Residues 1–21 traverse the membrane as a helical segment; that stretch reads MGSFSIWHWLIVLLIIMMVFG. Residues 39-51 show a composition bias toward basic and acidic residues; sequence FKEGMREGSEDKP. Residues 39–85 are disordered; it reads FKEGMREGSEDKPAGSQQGQQAAGQPPRELHDSTTIDVEARDKSKQG. Low complexity predominate over residues 52–65; it reads AGSQQGQQAAGQPP. Over residues 66-85 the composition is skewed to basic and acidic residues; sequence RELHDSTTIDVEARDKSKQG.

Belongs to the TatA/E family. The Tat system comprises two distinct complexes: a TatABC complex, containing multiple copies of TatA, TatB and TatC subunits, and a separate TatA complex, containing only TatA subunits. Substrates initially bind to the TatABC complex, which probably triggers association of the separate TatA complex to form the active translocon.

It is found in the cell inner membrane. Part of the twin-arginine translocation (Tat) system that transports large folded proteins containing a characteristic twin-arginine motif in their signal peptide across membranes. TatA could form the protein-conducting channel of the Tat system. The protein is Sec-independent protein translocase protein TatA of Ralstonia nicotianae (strain ATCC BAA-1114 / GMI1000) (Ralstonia solanacearum).